A 650-amino-acid chain; its full sequence is Putative polypeptide N-acetylgalactosaminyltransferase 9 (650 aa).

Residues methionine 1 to threonine 11 lie on the Cytoplasmic side of the membrane. Residues isoleucine 12–tyrosine 31 traverse the membrane as a helical; Signal-anchor for type II membrane protein segment. The Lumenal segment spans residues threonine 32–leucine 650. The segment at asparagine 84 to arginine 154 is disordered. Over residues histidine 107–isoleucine 136 the composition is skewed to basic and acidic residues. Intrachain disulfides connect cysteine 198-cysteine 432, cysteine 423-cysteine 499, cysteine 535-cysteine 554, cysteine 577-cysteine 590, and cysteine 616-cysteine 631. A catalytic subdomain A region spans residues leucine 208–arginine 317. Substrate is bound by residues cysteine 216, aspartate 249, and arginine 278. Residue aspartate 301 participates in Mn(2+) binding. Positions 302 and 303 each coordinate substrate. Histidine 303 contributes to the Mn(2+) binding site. 2 N-linked (GlcNAc...) asparagine glycosylation sites follow: asparagine 321 and asparagine 373. Residues proline 378–arginine 440 are catalytic subdomain B. Histidine 437 provides a ligand contact to Mn(2+). Substrate-binding residues include arginine 440 and tyrosine 445. The region spanning alanine 521–glutamate 643 is the Ricin B-type lectin domain.

This sequence belongs to the glycosyltransferase 2 family. GalNAc-T subfamily. As to quaternary structure, isoform A forms homotetramer. Isoform B forms homodimer. The cofactor is Mn(2+).

Its subcellular location is the golgi apparatus membrane. It catalyses the reaction L-seryl-[protein] + UDP-N-acetyl-alpha-D-galactosamine = a 3-O-[N-acetyl-alpha-D-galactosaminyl]-L-seryl-[protein] + UDP + H(+). It carries out the reaction L-threonyl-[protein] + UDP-N-acetyl-alpha-D-galactosamine = a 3-O-[N-acetyl-alpha-D-galactosaminyl]-L-threonyl-[protein] + UDP + H(+). It functions in the pathway protein modification; protein glycosylation. In terms of biological role, catalyzes the initial reaction in O-linked oligosaccharide biosynthesis, the transfer of an N-acetyl-D-galactosamine residue to a serine or threonine residue on the protein receptor. It can both act as a peptide transferase that transfers GalNAc onto unmodified peptide substrates, and as a glycopeptide transferase that requires the prior addition of a GalNAc on a peptide before adding additional GalNAc moieties. Functionally, N-acetylgalactosaminyltransferase which preferentially O-glycosylates negatively charge substrates. O-glycosylates mucin-like protein Sgs3 in the salivary gland but to a lesser extent than isoform B. By regulating the O-glycosylation of secretory cargo proteins plays a role in the morphology and maturation of salivary gland secretory granules. N-acetylgalactosaminyltransferase which preferentially O-glycosylates positively charge substrates. O-glycosylates mucin-like protein Sgs3 in the salivary gland. By regulating the O-glycosylation of secretory cargo proteins, plays a role in the morphology and maturation of salivary gland secretory granules. The protein is Putative polypeptide N-acetylgalactosaminyltransferase 9 of Drosophila melanogaster (Fruit fly).